The chain runs to 431 residues: Isochorismate synthase MenF (431 aa).

Lys-183 functions as the Proton acceptor in the catalytic mechanism. The Proton donor role is filled by Glu-233. Residues Glu-277 and Glu-414 each coordinate Mg(2+).

It belongs to the isochorismate synthase family. The cofactor is Mg(2+).

The catalysed reaction is chorismate = isochorismate. It participates in quinol/quinone metabolism; 1,4-dihydroxy-2-naphthoate biosynthesis; 1,4-dihydroxy-2-naphthoate from chorismate: step 1/7. The protein operates within quinol/quinone metabolism; menaquinone biosynthesis. Catalyzes the conversion of chorismate to isochorismate. The protein is Isochorismate synthase MenF of Pasteurella multocida (strain Pm70).